Here is a 147-residue protein sequence, read N- to C-terminus: Protein BUD31 homolog (147 aa).

The short motif at 8–12 (RRVRK) is the Nuclear localization signal element.

Belongs to the BUD31 (G10) family. In terms of assembly, identified in the spliceosome C complex.

It is found in the nucleus. In terms of biological role, involved in pre-mRNA splicing process. The polypeptide is Protein BUD31 homolog (Caenorhabditis elegans).